Reading from the N-terminus, the 118-residue chain is Ig heavy chain V region X24 (118 aa).

In terms of domain architecture, Ig-like spans 1–111; sequence EVKLLESGGG…GYFDYWGQGT (111 aa).

This is Ig heavy chain V region X24 from Mus musculus (Mouse).